A 785-amino-acid chain; its full sequence is Cation/H(+) antiporter 1 (785 aa).

The next 12 helical transmembrane spans lie at 19 to 39 (LNTM…FYLF), 44 to 64 (GQAG…LTII), 79 to 99 (YYIF…GLEI), 112 to 132 (IVIT…FLWF), 143 to 163 (FLTF…PVVI), 179 to 199 (LAIS…TIVL), 201 to 221 (FISG…GVII), 240 to 260 (YLSK…ALTI), 294 to 314 (YPIH…RFSV), 323 to 343 (LVLG…VLFA), 352 to 372 (QYWL…LVLL), and 389 to 409 (MFVA…SLLL).

Belongs to the monovalent cation:proton antiporter 2 (CPA2) transporter (TC 2.A.37) family. CHX (TC 2.A.37.4) subfamily. Specifically expressed in pollen.

The protein resides in the membrane. Functionally, may operate as a cation/H(+) antiporter. This is Cation/H(+) antiporter 1 (CHX1) from Arabidopsis thaliana (Mouse-ear cress).